The following is a 160-amino-acid chain: Arginine repressor (160 aa).

The protein belongs to the ArgR family.

It is found in the cytoplasm. Its pathway is amino-acid biosynthesis; L-arginine biosynthesis [regulation]. Regulates arginine biosynthesis genes. This Anaeromyxobacter dehalogenans (strain 2CP-1 / ATCC BAA-258) protein is Arginine repressor.